Here is a 180-residue protein sequence, read N- to C-terminus: MNTRLEKFYKENVVPALMKEFGYTNPMEVPKLVKVTLNMGVGEAATNKKILENAVADMAKISGQKPVVTKSRVSVASFKIRDGWPIGCKTTLRRAKMYEFLDRLINISLPRVRDFRGVSGRSFDGRGNFNMGVKEQIIFPEIDFDAVDAIRGMDIAITTTAKTDAEAKALLAAFKFPFRN.

It belongs to the universal ribosomal protein uL5 family. Part of the 50S ribosomal subunit; part of the 5S rRNA/L5/L18/L25 subcomplex. Contacts the 5S rRNA and the P site tRNA. Forms a bridge to the 30S subunit in the 70S ribosome.

This is one of the proteins that bind and probably mediate the attachment of the 5S RNA into the large ribosomal subunit, where it forms part of the central protuberance. In the 70S ribosome it contacts protein S13 of the 30S subunit (bridge B1b), connecting the 2 subunits; this bridge is implicated in subunit movement. Contacts the P site tRNA; the 5S rRNA and some of its associated proteins might help stabilize positioning of ribosome-bound tRNAs. This chain is Large ribosomal subunit protein uL5, found in Xanthomonas euvesicatoria pv. vesicatoria (strain 85-10) (Xanthomonas campestris pv. vesicatoria).